Consider the following 259-residue polypeptide: NADP-dependent 3-hydroxy acid dehydrogenase (259 aa).

Ile11 provides a ligand contact to NADP(+). Ser42 bears the Phosphoserine mark. Thr43 is modified (phosphothreonine). Asp65, Asn92, Arg126, Tyr158, Lys162, and Val191 together coordinate NADP(+). The Proton acceptor role is filled by Tyr158. The Lowers pKa of active site Tyr role is filled by Lys162.

This sequence belongs to the short-chain dehydrogenases/reductases (SDR) family. In terms of assembly, homotetramer.

The protein localises to the cytoplasm. The protein resides in the nucleus. It catalyses the reaction L-allo-threonine + NADP(+) = aminoacetone + CO2 + NADPH. Its function is as follows. NADP-dependent dehydrogenase with broad substrate specificity acting on 3-hydroxy acids. Catalyzes the NADP-dependent oxidation of L-allo-threonine to L-2-amino-3-keto-butyrate, which is spontaneously decarboxylated into aminoacetone. Also acts on D-threonine, L-serine, D-serine, D-3-hydroxyisobutyrate, L-3-hydroxyisobutyrate, D-glycerate and L-glycerate. The chain is NADP-dependent 3-hydroxy acid dehydrogenase from Schizosaccharomyces pombe (strain 972 / ATCC 24843) (Fission yeast).